We begin with the raw amino-acid sequence, 354 residues long: MTATLSDIRPEAPAVPVQLHRPARTPAPAAGTWSVQAVQELLDLPFMELLWRAQSVHREHWPAGDVELATLLSVKTGGCPENCGYCPQSAEFDTGVKAQKLMSVDEVTTAARAARDAGATRFCMGAAWRAPKDRDIEKVGELIAAVKGLGMQTCATLGMLEPHQAQALKGAGLDYYNHNLDTAPEYYTDVVSTRAYQERLDTLRHVREAGISVCCGGIIGMGEAPVHRAGLIAQLANLDPYPESVPINSLVRVPGTPLADSDPVDPLDFVRVIAVARITMPRARVRLSAGRQQMGDAVQALCFLAGANSIFYGDKLLVTGNPDVDADVQLLAKLGMNGRQVASTEPHDLHHHAP.

A Radical SAM core domain is found at 64–282; that stretch reads GDVELATLLS…IAVARITMPR (219 aa). 3 residues coordinate [4Fe-4S] cluster: C79, C83, and C86. [2Fe-2S] cluster-binding residues include C123, C154, C214, and R286.

The protein belongs to the radical SAM superfamily. Biotin synthase family. As to quaternary structure, homodimer. Requires [4Fe-4S] cluster as cofactor. It depends on [2Fe-2S] cluster as a cofactor.

The catalysed reaction is (4R,5S)-dethiobiotin + (sulfur carrier)-SH + 2 reduced [2Fe-2S]-[ferredoxin] + 2 S-adenosyl-L-methionine = (sulfur carrier)-H + biotin + 2 5'-deoxyadenosine + 2 L-methionine + 2 oxidized [2Fe-2S]-[ferredoxin]. Its pathway is cofactor biosynthesis; biotin biosynthesis; biotin from 7,8-diaminononanoate: step 2/2. Functionally, catalyzes the conversion of dethiobiotin (DTB) to biotin by the insertion of a sulfur atom into dethiobiotin via a radical-based mechanism. This chain is Biotin synthase, found in Paracidovorax citrulli (strain AAC00-1) (Acidovorax citrulli).